The sequence spans 651 residues: F-box only protein 43 (651 aa).

Disordered stretches follow at residues 14-42 (MTAG…LKGF) and 140-171 (LRRI…TSTL). A compositionally biased stretch (polar residues) spans 27 to 36 (TSVSQDSGYS). S33 is modified (phosphoserine; by PLK1). Position 195 is a phosphothreonine; by CaMK2 (T195). Residues 424–499 (SGCFELPEDS…QDKSAHQRRK (76 aa)) form the F-box domain. The ZBR-type zinc finger occupies 579–627 (ALKPCPRCQYPAKYQALKKRGTCSRKDCGFDFCSLCLCTFHGSKECGTG). Zn(2+)-binding residues include C583, C586, C601, C606, C611, C614, H619, and C624.

As to quaternary structure, part of a SCF (SKP1-cullin-F-box) protein ligase complex. Interaction with SKP1 does not occur. In terms of processing, phosphorylated on Thr-195 by CaMK2 in response to calcium during egg activation, which promotes subsequent phosphorylation by PLK1, ubiquitination and protesomal degradation. Ubiquitinated by FBXW1 during egg activation, which promotes proteasomal degradation.

It participates in protein modification; protein ubiquitination. Its function is as follows. Required to prevent anaphase onset in cytostatic factor-arrested oocytes. Inhibits the anaphase-promoting complex/cyclosome (APC/C) ubiquitin ligase and prevents cyclin degradation. Probably recognizes and binds to some phosphorylated proteins and promotes their ubiquitination and degradation. The chain is F-box only protein 43 (fbxo43) from Xenopus laevis (African clawed frog).